A 382-amino-acid polypeptide reads, in one-letter code: Mannitol-1-phosphate 5-dehydrogenase (382 aa).

Residue 4 to 15 (AVHFGAGNIGRG) participates in NAD(+) binding.

Belongs to the mannitol dehydrogenase family.

It catalyses the reaction D-mannitol 1-phosphate + NAD(+) = beta-D-fructose 6-phosphate + NADH + H(+). This chain is Mannitol-1-phosphate 5-dehydrogenase, found in Vibrio parahaemolyticus serotype O3:K6 (strain RIMD 2210633).